The primary structure comprises 412 residues: Putative odorant receptor 85d (412 aa).

Residues 1-56 (MLTKKDTQSAKEQEKLKAIPLHSFLKYANVFYLSIGMMAYDHKYSQKWKEVLLHWT) are Cytoplasmic-facing. A helical membrane pass occupies residues 57-77 (FIAQMVNLNTVLISELIYVFL). Residues 78–84 (AIGKGSN) are Extracellular-facing. A helical membrane pass occupies residues 85–105 (FLEATMNLSFIGFVIVGDFKI). Residues 106-152 (WNISRQRKRLTQVVSRLEELHPQGLAQQEPYNIGHHLSGYSRYSKFY) lie on the Cytoplasmic side of the membrane. A helical transmembrane segment spans residues 153–173 (FGMHMVLIWTYNLYWAVYYLV). Residues 174-219 (CDFWLGMRQFERMLPYYCWVPWDWSTGYSYYFMYISQNIGGQACLS) lie on the Extracellular side of the membrane. A helical membrane pass occupies residues 220–240 (GQLAADMLMCALVTLVVMHFI). At 241 to 282 (RLSAHIESHVAGIGSFQHDLEFLQATVAYHQSLIHLCQDINE) the chain is on the cytoplasmic side. Residues 283–303 (IFGVSLLSNFVSSSFIICFVG) form a helical membrane-spanning segment. Residues 304–314 (FQMTIGSKIDN) are Extracellular-facing. The helical transmembrane segment at 315–335 (LVMLVLFLFCAMVQVFMIATH) threads the bilayer. At 336 to 382 (AQRLVDASEQIGQAVYNHDWFRADLRYRKMLILIIKRAQQPSRLKAT) the chain is on the cytoplasmic side. The helical transmembrane segment at 383 to 403 (MFLNISLVTVSDLLQLSYKFF) threads the bilayer. The Extracellular segment spans residues 404 to 412 (ALLRTMYVN).

It belongs to the insect chemoreceptor superfamily. Heteromeric odorant receptor channel (TC 1.A.69) family. Or49a subfamily. Interacts with Orco. Complexes exist early in the endomembrane system in olfactory sensory neurons (OSNs), coupling these complexes to the conserved ciliary trafficking pathway. As to expression, expressed in olfactory sensory neurons in the maxillary palp.

The protein localises to the cell membrane. Its function is as follows. Odorant receptor which mediates acceptance or avoidance behavior, depending on its substrates. The odorant receptor repertoire encodes a large collection of odor stimuli that vary widely in identity, intensity, and duration. May form a complex with Orco to form odorant-sensing units, providing sensitive and prolonged odorant signaling and calcium permeability. This Drosophila melanogaster (Fruit fly) protein is Putative odorant receptor 85d (Or85d).